The following is a 331-amino-acid chain: UPF0194 membrane protein Ent638_1286 (331 aa).

The signal sequence occupies residues 1–16 (MKKPVVVILAVVVLLA). Residues 107–208 (EEVAQAEAAV…LDLHDTTLIA (102 aa)) adopt a coiled-coil conformation.

It belongs to the UPF0194 family.

It is found in the periplasm. This is UPF0194 membrane protein Ent638_1286 from Enterobacter sp. (strain 638).